Consider the following 188-residue polypeptide: Adenylate kinase (188 aa).

12-17 (GSGKTT) serves as a coordination point for ATP. Residues 33-62 (STGDLLRAEVASGSELGKKIDSFISKGNLV) form an NMP region. AMP is bound by residues Thr34, Arg39, 60–62 (NLV), 87–90 (GYPR), and Gln94. The LID stretch occupies residues 129–135 (GRARGAD). Position 130 (Arg130) interacts with ATP. The AMP site is built by Arg132 and Arg144. Arg172 contacts ATP.

The protein belongs to the adenylate kinase family. Monomer.

The protein resides in the cytoplasm. The enzyme catalyses AMP + ATP = 2 ADP. It participates in purine metabolism; AMP biosynthesis via salvage pathway; AMP from ADP: step 1/1. Catalyzes the reversible transfer of the terminal phosphate group between ATP and AMP. Plays an important role in cellular energy homeostasis and in adenine nucleotide metabolism. The protein is Adenylate kinase of Campylobacter curvus (strain 525.92).